The chain runs to 306 residues: Putative S-adenosyl-L-methionine-dependent methyltransferase FRAAL5401 (306 aa).

S-adenosyl-L-methionine-binding positions include aspartate 126 and 155-156 (DL). Positions 201–225 (LSAPESRVATENRPNPKPGDEDRTK) are disordered.

This sequence belongs to the UPF0677 family.

Exhibits S-adenosyl-L-methionine-dependent methyltransferase activity. This is Putative S-adenosyl-L-methionine-dependent methyltransferase FRAAL5401 from Frankia alni (strain DSM 45986 / CECT 9034 / ACN14a).